The chain runs to 243 residues: UDP-2,3-diacylglucosamine hydrolase (243 aa).

Asp9, His11, Asp42, Asn79, and His114 together coordinate Mn(2+). 79–80 (NR) lines the substrate pocket. The substrate site is built by Asp122, Ser160, Asn164, and His195. 2 residues coordinate Mn(2+): His195 and His197.

The protein belongs to the LpxH family. Mn(2+) serves as cofactor.

It localises to the cell inner membrane. The catalysed reaction is UDP-2-N,3-O-bis[(3R)-3-hydroxytetradecanoyl]-alpha-D-glucosamine + H2O = 2-N,3-O-bis[(3R)-3-hydroxytetradecanoyl]-alpha-D-glucosaminyl 1-phosphate + UMP + 2 H(+). The protein operates within glycolipid biosynthesis; lipid IV(A) biosynthesis; lipid IV(A) from (3R)-3-hydroxytetradecanoyl-[acyl-carrier-protein] and UDP-N-acetyl-alpha-D-glucosamine: step 4/6. Hydrolyzes the pyrophosphate bond of UDP-2,3-diacylglucosamine to yield 2,3-diacylglucosamine 1-phosphate (lipid X) and UMP by catalyzing the attack of water at the alpha-P atom. Involved in the biosynthesis of lipid A, a phosphorylated glycolipid that anchors the lipopolysaccharide to the outer membrane of the cell. This Coxiella burnetii (strain RSA 331 / Henzerling II) protein is UDP-2,3-diacylglucosamine hydrolase.